The primary structure comprises 541 residues: 2-succinyl-5-enolpyruvyl-6-hydroxy-3-cyclohexene-1-carboxylate synthase (541 aa).

It belongs to the TPP enzyme family. MenD subfamily. As to quaternary structure, homodimer. Requires Mg(2+) as cofactor. It depends on Mn(2+) as a cofactor. Thiamine diphosphate is required as a cofactor.

It catalyses the reaction isochorismate + 2-oxoglutarate + H(+) = 5-enolpyruvoyl-6-hydroxy-2-succinyl-cyclohex-3-ene-1-carboxylate + CO2. It participates in quinol/quinone metabolism; 1,4-dihydroxy-2-naphthoate biosynthesis; 1,4-dihydroxy-2-naphthoate from chorismate: step 2/7. Its pathway is quinol/quinone metabolism; menaquinone biosynthesis. Functionally, catalyzes the thiamine diphosphate-dependent decarboxylation of 2-oxoglutarate and the subsequent addition of the resulting succinic semialdehyde-thiamine pyrophosphate anion to isochorismate to yield 2-succinyl-5-enolpyruvyl-6-hydroxy-3-cyclohexene-1-carboxylate (SEPHCHC). This is 2-succinyl-5-enolpyruvyl-6-hydroxy-3-cyclohexene-1-carboxylate synthase from Rhodococcus jostii (strain RHA1).